We begin with the raw amino-acid sequence, 999 residues long: Disks large-associated protein 1 (999 aa).

Disordered regions lie at residues 155–213, 395–418, and 918–989; these read HSLE…GYWS, MAED…ARRA, and NWRP…DSIE. Over residues 194–204 the composition is skewed to basic and acidic residues; the sequence is RERCKSAEPKN. Composition is skewed to basic and acidic residues over residues 923-932 and 947-965; these read DPPERKERRL and LARD…EARK. A compositionally biased stretch (polar residues) spans 976 to 985; it reads VRQNSATESA. Residues 997–999 carry the PDZ-binding motif; it reads TRL.

Belongs to the SAPAP family.

The protein localises to the cell membrane. It is found in the postsynaptic density. It localises to the synapse. In terms of biological role, part of the postsynaptic scaffold in neuronal cells. This is Disks large-associated protein 1 from Danio rerio (Zebrafish).